A 353-amino-acid polypeptide reads, in one-letter code: Basic membrane protein C (353 aa).

A signal peptide spans 1–16 (MFKRFIFITLSLLVFA). The N-palmitoyl cysteine moiety is linked to residue cysteine 17. Residue cysteine 17 is the site of S-diacylglycerol cysteine attachment.

Belongs to the BMP lipoprotein family. Monomer.

It is found in the cell inner membrane. May be part of an ABC-type nucleoside uptake system involved in the purine salvage pathway. The protein is Basic membrane protein C (bmpC) of Borreliella burgdorferi (strain ATCC 35210 / DSM 4680 / CIP 102532 / B31) (Borrelia burgdorferi).